Consider the following 362-residue polypeptide: Probable choline-phosphate cytidylyltransferase (362 aa).

Over residues 1-37 the composition is skewed to basic and acidic residues; the sequence is MGEEGIKINDTHKRRIDEVEPSEKEDNVERQTKKYNF. Residues 1-79 are disordered; the sequence is MGEEGIKIND…VSPVEEEPRD (79 aa). Residues 109-117 and lysine 147 each bind CTP; that span reads VFDLFHIGH. Positions 147 and 176 each coordinate substrate. CTP is bound by residues 193–194, tyrosine 198, and 221–225; these read HD and RTEGV. Residues 308–362 are disordered; it reads KNPLHGSSEPSSPGPTGFLGGINRWMQRRSSSHYDLPRVGNEIAASSSSATEENH. Composition is skewed to low complexity over residues 313–323 and 351–362; these read GSSEPSSPGPT and AASSSSATEENH. Phosphoserine is present on residues serine 315 and serine 319. Threonine 323 carries the post-translational modification Phosphothreonine. Serine 355 carries the post-translational modification Phosphoserine.

It belongs to the cytidylyltransferase family.

It is found in the nucleus. The catalysed reaction is phosphocholine + CTP + H(+) = CDP-choline + diphosphate. The protein is Probable choline-phosphate cytidylyltransferase of Schizosaccharomyces pombe (strain 972 / ATCC 24843) (Fission yeast).